A 120-amino-acid chain; its full sequence is NAD(P)H-quinone oxidoreductase subunit 3, chloroplastic (120 aa).

The next 3 helical transmembrane spans lie at 10–30 (FWAF…ISGV), 64–84 (MFAL…PWAM), and 88–108 (VLGV…IGGL).

The protein belongs to the complex I subunit 3 family. As to quaternary structure, NDH is composed of at least 16 different subunits, 5 of which are encoded in the nucleus.

It localises to the plastid. The protein localises to the chloroplast thylakoid membrane. It carries out the reaction a plastoquinone + NADH + (n+1) H(+)(in) = a plastoquinol + NAD(+) + n H(+)(out). The catalysed reaction is a plastoquinone + NADPH + (n+1) H(+)(in) = a plastoquinol + NADP(+) + n H(+)(out). In terms of biological role, NDH shuttles electrons from NAD(P)H:plastoquinone, via FMN and iron-sulfur (Fe-S) centers, to quinones in the photosynthetic chain and possibly in a chloroplast respiratory chain. The immediate electron acceptor for the enzyme in this species is believed to be plastoquinone. Couples the redox reaction to proton translocation, and thus conserves the redox energy in a proton gradient. This chain is NAD(P)H-quinone oxidoreductase subunit 3, chloroplastic, found in Ipomoea purpurea (Common morning glory).